The sequence spans 317 residues: Lipoyl synthase (317 aa).

A disordered region spans residues 1 to 21 (MVTVIDTLARPRHPEKANRPE). Positions 12-21 (RHPEKANRPE) are enriched in basic and acidic residues. The [4Fe-4S] cluster site is built by cysteine 57, cysteine 62, cysteine 68, cysteine 83, cysteine 87, cysteine 90, and serine 296. The Radical SAM core domain maps to 69-285 (WEKKHATFMI…ETVAYAKGFL (217 aa)).

It belongs to the radical SAM superfamily. Lipoyl synthase family. Requires [4Fe-4S] cluster as cofactor.

The protein resides in the cytoplasm. It carries out the reaction [[Fe-S] cluster scaffold protein carrying a second [4Fe-4S](2+) cluster] + N(6)-octanoyl-L-lysyl-[protein] + 2 oxidized [2Fe-2S]-[ferredoxin] + 2 S-adenosyl-L-methionine + 4 H(+) = [[Fe-S] cluster scaffold protein] + N(6)-[(R)-dihydrolipoyl]-L-lysyl-[protein] + 4 Fe(3+) + 2 hydrogen sulfide + 2 5'-deoxyadenosine + 2 L-methionine + 2 reduced [2Fe-2S]-[ferredoxin]. It functions in the pathway protein modification; protein lipoylation via endogenous pathway; protein N(6)-(lipoyl)lysine from octanoyl-[acyl-carrier-protein]: step 2/2. Catalyzes the radical-mediated insertion of two sulfur atoms into the C-6 and C-8 positions of the octanoyl moiety bound to the lipoyl domains of lipoate-dependent enzymes, thereby converting the octanoylated domains into lipoylated derivatives. The polypeptide is Lipoyl synthase (Xanthobacter autotrophicus (strain ATCC BAA-1158 / Py2)).